The sequence spans 78 residues: Large ribosomal subunit protein bL28 (78 aa).

The segment at Met-1–Asn-23 is disordered.

This sequence belongs to the bacterial ribosomal protein bL28 family.

The sequence is that of Large ribosomal subunit protein bL28 from Shewanella frigidimarina (strain NCIMB 400).